The sequence spans 255 residues: Pyrroloquinoline-quinone synthase (255 aa).

It belongs to the PqqC family.

It catalyses the reaction 6-(2-amino-2-carboxyethyl)-7,8-dioxo-1,2,3,4,7,8-hexahydroquinoline-2,4-dicarboxylate + 3 O2 = pyrroloquinoline quinone + 2 H2O2 + 2 H2O + H(+). Its pathway is cofactor biosynthesis; pyrroloquinoline quinone biosynthesis. In terms of biological role, ring cyclization and eight-electron oxidation of 3a-(2-amino-2-carboxyethyl)-4,5-dioxo-4,5,6,7,8,9-hexahydroquinoline-7,9-dicarboxylic-acid to PQQ. The protein is Pyrroloquinoline-quinone synthase of Cereibacter sphaeroides (strain KD131 / KCTC 12085) (Rhodobacter sphaeroides).